Consider the following 648-residue polypeptide: MEALLQGLQRQDRMGALQDSCEAELQELMKQIDIMLDHKRSQWEAETETMKTRLELKEQELNCALDSEERLNQEVRRLRQQLIQQEEETQNKTTQYEAQLSGFKEELNRLKKSYEKVQKKHLRSEMKAKAEEERSEVSRLTRRLEEFRQRSLDWEKQRLLYQQQLSGLEAQRKTLIEQTEMYQQQSHNRKQMLEQTNLVGRSELQNLSGQLHRANDSLCAKEEELETLKIQLRCAVEGQKRAEHETELSKQAVQALKEKAELRATLQAHTEFLQGSRVQKHELLPEGYRGSEVLRENNSIRSLEERLQETGQVGGETEVEAIRSKLSVSRMNEQRLQAEVTCLEDSVESVTSQCQLLAKELKGKEEYLHGVKEDHQKCLSENKKLKGQLSQAELTHKSVLDGMRKEISQLTQELHQRDIRMASSAGIDWERKIKAERQRAEREAAEHRMSLNALENLRQENCRLSELLQTQEPDVAQALVNLEQANQRLQRELLQTQEKLELIAQRRESEIQNAVDSISQELLNKQEQELRIMQERLKVYEQEMQTFRSQQDAASSGSSLESIFSEVWKEQATGSPISAASVDSAIEPVEDLASSLPVPPTSPANAVASRFLQEEEQRSHELLQRLNAHIEELKQESQRTVEHFTQAR.

Coiled-coil stretches lie at residues 19–188 and 222–555; these read DSCE…QSHN and EEEL…DAAS. Serine 559 carries the phosphoserine; by atm and atr modification. Residues 611–644 adopt a coiled-coil conformation; the sequence is FLQEEEQRSHELLQRLNAHIEELKQESQRTVEHF.

The protein belongs to the CEP63 family. Post-translationally, phosphorylation at Ser-559 by atm and atr promotes its delocalization from the centrosome and impairs its ability to promote centrosome dependent spindle assembly.

It localises to the cytoplasm. The protein localises to the cytoskeleton. Its subcellular location is the microtubule organizing center. The protein resides in the centrosome. It is found in the centriole. Functionally, required for normal spindle assembly. Plays a key role in mother-centriole-dependent centriole duplication. Plays a role in DNA damage response. Following DNA damage, such as double-strand breaks (DSBs), is removed from centrosomes; this leads to the inactivation of spindle assembly and delay in mitotic progression. The sequence is that of Centrosomal protein of 63 kDa-B (cep63-b) from Xenopus laevis (African clawed frog).